The sequence spans 348 residues: Dihydroorotase (348 aa).

Zn(2+) contacts are provided by His-17 and His-19. Residues 19–21 (HLR) and Asn-45 each bind substrate. Lys-103, His-140, and His-178 together coordinate Zn(2+). Lys-103 bears the N6-carboxylysine mark. His-140 lines the substrate pocket. Leu-223 contributes to the substrate binding site. Asp-251 provides a ligand contact to Zn(2+). The active site involves Asp-251. 2 residues coordinate substrate: His-255 and Ala-267.

This sequence belongs to the metallo-dependent hydrolases superfamily. DHOase family. Class II DHOase subfamily. Homodimer. It depends on Zn(2+) as a cofactor.

The enzyme catalyses (S)-dihydroorotate + H2O = N-carbamoyl-L-aspartate + H(+). Its pathway is pyrimidine metabolism; UMP biosynthesis via de novo pathway; (S)-dihydroorotate from bicarbonate: step 3/3. Functionally, catalyzes the reversible cyclization of carbamoyl aspartate to dihydroorotate. The chain is Dihydroorotase from Salmonella paratyphi B (strain ATCC BAA-1250 / SPB7).